The primary structure comprises 60 residues: MKNTILILFTAFIALLGFFGMSAEALADLKADPLAGPNPDADPEAINLKAIAALAKKLLG.

The N-terminal stretch at 1–25 (MKNTILILFTAFIALLGFFGMSAEA) is a signal peptide. A propeptide spanning residues 26–45 (LADLKADPLAGPNPDADPEA) is cleaved from the precursor. 3 AXPX repeats span residues 31–34 (ADPL), 35–38 (AGPN), and 41–44 (ADPE). The residue at position 59 (L59) is a Leucine amide.

It belongs to the MCD family. Mastoparan subfamily. Expressed by the venom gland.

Its subcellular location is the secreted. In terms of biological role, antimicrobial peptide with activities against Gram-negative and Gram-positive bacteria and the fungi C.albicans and C.parapsilosis. Exhibits little hemolytic activity against washed human erythrocytes. Also acts as a mast cell degranulating peptide. Its mast cell degranulation activity may be related to the activation of G-protein coupled receptors in mast cells as well as interaction with other proteins located in cell endosomal membranes in the mast cells. Functionally, antimicrobial peptide with activities against Gram-negative and Gram-positive bacteria and the fungi C.albicans and C.parapsilosis. Exhibits little hemolytic activity against washed human erythrocytes. Also acts as a mast cell degranulating peptide. This chain is Mastoparan-VT1, found in Vespa tropica (Greater banded hornet).